A 450-amino-acid chain; its full sequence is 3-phosphoshikimate 1-carboxyvinyltransferase (450 aa).

3 residues coordinate 3-phosphoshikimate: lysine 28, serine 29, and arginine 33. A phosphoenolpyruvate-binding site is contributed by lysine 28. Phosphoenolpyruvate contacts are provided by glycine 100 and arginine 128. Residues serine 173, glutamine 175, aspartate 326, and lysine 353 each contribute to the 3-phosphoshikimate site. Glutamine 175 is a binding site for phosphoenolpyruvate. The Proton acceptor role is filled by aspartate 326. Residues arginine 357 and arginine 402 each coordinate phosphoenolpyruvate.

Belongs to the EPSP synthase family. As to quaternary structure, monomer.

The protein resides in the cytoplasm. It catalyses the reaction 3-phosphoshikimate + phosphoenolpyruvate = 5-O-(1-carboxyvinyl)-3-phosphoshikimate + phosphate. It participates in metabolic intermediate biosynthesis; chorismate biosynthesis; chorismate from D-erythrose 4-phosphate and phosphoenolpyruvate: step 6/7. Functionally, catalyzes the transfer of the enolpyruvyl moiety of phosphoenolpyruvate (PEP) to the 5-hydroxyl of shikimate-3-phosphate (S3P) to produce enolpyruvyl shikimate-3-phosphate and inorganic phosphate. This is 3-phosphoshikimate 1-carboxyvinyltransferase from Brucella melitensis biotype 1 (strain ATCC 23456 / CCUG 17765 / NCTC 10094 / 16M).